Here is a 131-residue protein sequence, read N- to C-terminus: Small ribosomal subunit protein uS11 (131 aa).

Belongs to the universal ribosomal protein uS11 family. Part of the 30S ribosomal subunit. Interacts with proteins S7 and S18. Binds to IF-3.

Located on the platform of the 30S subunit, it bridges several disparate RNA helices of the 16S rRNA. Forms part of the Shine-Dalgarno cleft in the 70S ribosome. In Trichodesmium erythraeum (strain IMS101), this protein is Small ribosomal subunit protein uS11.